A 264-amino-acid polypeptide reads, in one-letter code: Myozenin-2 (264 aa).

R53 carries the omega-N-methylarginine modification. Residues 98-134 (ESGSQQAPFTPPNTPDPRSPPNPENIAPGYSGPLKEI) are disordered. S101 carries the post-translational modification Phosphoserine. A compositionally biased stretch (pro residues) spans 106–120 (FTPPNTPDPRSPPNP). Phosphothreonine occurs at positions 107 and 111. The residue at position 116 (S116) is a Phosphoserine.

It belongs to the myozenin family. As to quaternary structure, interacts via its C-terminus with spectrin repeats 3 and 4 of ACTN2. Interacts with ACTN1, LDB3, MYOT and PPP3CA.

The protein localises to the cytoplasm. Its subcellular location is the myofibril. It is found in the sarcomere. The protein resides in the z line. In terms of biological role, myozenins may serve as intracellular binding proteins involved in linking Z line proteins such as alpha-actinin, gamma-filamin, TCAP/telethonin, LDB3/ZASP and localizing calcineurin signaling to the sarcomere. Plays an important role in the modulation of calcineurin signaling. May play a role in myofibrillogenesis. This is Myozenin-2 (MYOZ2) from Bos taurus (Bovine).